A 397-amino-acid polypeptide reads, in one-letter code: Pyruvate dehydrogenase E1 component subunit alpha, mitochondrial (397 aa).

Positions 98, 124, 125, 173, 175, 204, 205, 206, 233, and 235 each coordinate pyruvate. Thiamine diphosphate-binding residues include tyrosine 124, arginine 125, glycine 173, valine 175, aspartate 204, glycine 205, alanine 206, and asparagine 233. Aspartate 204 provides a ligand contact to Mg(2+). Asparagine 233 and tyrosine 235 together coordinate Mg(2+). A thiamine diphosphate-binding site is contributed by histidine 299.

Tetramer of 2 alpha and 2 beta subunits. It depends on thiamine diphosphate as a cofactor. Requires Mg(2+) as cofactor.

Its subcellular location is the mitochondrion matrix. The enzyme catalyses N(6)-[(R)-lipoyl]-L-lysyl-[protein] + pyruvate + H(+) = N(6)-[(R)-S(8)-acetyldihydrolipoyl]-L-lysyl-[protein] + CO2. With respect to regulation, E1 activity is regulated by phosphorylation (inactivation) and dephosphorylation (activation) of the alpha subunit. Its function is as follows. The pyruvate dehydrogenase complex catalyzes the overall conversion of pyruvate to acetyl-CoA and CO(2). It contains multiple copies of three enzymatic components: pyruvate dehydrogenase (E1), dihydrolipoamide acetyltransferase (E2) and lipoamide dehydrogenase (E3). This Pisum sativum (Garden pea) protein is Pyruvate dehydrogenase E1 component subunit alpha, mitochondrial.